We begin with the raw amino-acid sequence, 398 residues long: G2/mitotic-specific cyclin-B2 (398 aa).

Threonine 8 carries the phosphothreonine modification. Residues serine 11, serine 77, and serine 92 each carry the phosphoserine modification. Threonine 94 is subject to Phosphothreonine. Residues serine 99, serine 392, and serine 398 each carry the phosphoserine modification.

It belongs to the cyclin family. Cyclin AB subfamily. In terms of assembly, interacts with the CDK1 protein kinase to form a serine/threonine kinase holoenzyme complex also known as maturation promoting factor (MPF). The cyclin subunit imparts substrate specificity to the complex.

In terms of biological role, essential for the control of the cell cycle at the G2/M (mitosis) transition. The protein is G2/mitotic-specific cyclin-B2 (CCNB2) of Homo sapiens (Human).